The primary structure comprises 156 residues: Aspartate carbamoyltransferase regulatory chain (156 aa).

Zn(2+) contacts are provided by C110, C115, C140, and C143.

This sequence belongs to the PyrI family. As to quaternary structure, contains catalytic and regulatory chains. Zn(2+) serves as cofactor.

In terms of biological role, involved in allosteric regulation of aspartate carbamoyltransferase. This Methanocella arvoryzae (strain DSM 22066 / NBRC 105507 / MRE50) protein is Aspartate carbamoyltransferase regulatory chain.